The following is a 252-amino-acid chain: Phosphosulfolactate synthase (252 aa).

Belongs to the phosphosulfolactate synthase family.

It catalyses the reaction (2R)-O-phospho-3-sulfolactate = phosphoenolpyruvate + sulfite + H(+). Catalyzes the addition of sulfite to phosphoenolpyruvate (PEP) to yield (2R)-phospho-3-sulfolactate (PSL). Is probably involved in the biosynthesis of L-sulfolactate, which is a major constituent of sporulating cells and mature spores. The polypeptide is Phosphosulfolactate synthase (yitD) (Bacillus subtilis (strain 168)).